Reading from the N-terminus, the 402-residue chain is Large ribosomal subunit protein uL3 (402 aa).

The disordered stretch occupies residues 1-35; that stretch reads MSHRKFSAPRHGSMGFTPKKRSKRHRGKVKAFPKD. Over residues 18-31 the composition is skewed to basic residues; it reads PKKRSKRHRGKVKA.

The protein belongs to the universal ribosomal protein uL3 family.

It is found in the cytoplasm. The L3 protein is a component of the large subunit of cytoplasmic ribosomes. The sequence is that of Large ribosomal subunit protein uL3 (RPL3) from Toxocara canis (Canine roundworm).